Consider the following 534-residue polypeptide: tRNA pseudouridine synthase 1 (534 aa).

The interval 1–32 (MGRGGKRTWYNGDRREAKRNRPNSIYNGEGRP) is disordered. Asp-103 acts as the Nucleophile in catalysis. Disordered regions lie at residues 246–271 (LANS…DSDS) and 507–534 (QEVS…DLEG). A phosphoserine mark is found at Ser-518, Ser-519, and Ser-525.

Belongs to the tRNA pseudouridine synthase TruA family. The cofactor is Zn(2+).

The protein localises to the nucleus. It catalyses the reaction a uridine in tRNA = a pseudouridine in tRNA. The enzyme catalyses uridine in snRNA = pseudouridine in snRNA. The catalysed reaction is a uridine in mRNA = a pseudouridine in mRNA. In terms of biological role, formation of pseudouridine at positions 27 and 28 in the anticodon stem and loop of transfer RNAs; at positions 34 and 36 of intron-containing precursor tRNA(Ile) and at position 35 in the intron-containing tRNA(Tyr). Catalyzes pseudouridylation at position 44 in U2 snRNA. Also catalyzes pseudouridylation of mRNAs. This is tRNA pseudouridine synthase 1 (pus1) from Schizosaccharomyces pombe (strain 972 / ATCC 24843) (Fission yeast).